The following is a 226-amino-acid chain: Uridylate kinase (226 aa).

6–10 (KISGK) is a binding site for ATP. Gly43 contacts UMP. ATP contacts are provided by Gly44 and Arg48. Residues Asp65 and 113–119 (FQPGQST) each bind UMP. 4 residues coordinate ATP: Thr139, Asn140, Tyr145, and Asp148.

Belongs to the UMP kinase family. As to quaternary structure, homohexamer.

The protein localises to the cytoplasm. It carries out the reaction UMP + ATP = UDP + ADP. It functions in the pathway pyrimidine metabolism; CTP biosynthesis via de novo pathway; UDP from UMP (UMPK route): step 1/1. With respect to regulation, inhibited by UTP. Its function is as follows. Catalyzes the reversible phosphorylation of UMP to UDP. This Sulfurisphaera tokodaii (strain DSM 16993 / JCM 10545 / NBRC 100140 / 7) (Sulfolobus tokodaii) protein is Uridylate kinase.